The primary structure comprises 88 residues: Small ribosomal subunit protein bS20 (88 aa).

Positions 1–28 (MANIKSQIKRNKTNEKARLRNKAVKSSL) are disordered.

Belongs to the bacterial ribosomal protein bS20 family.

Its function is as follows. Binds directly to 16S ribosomal RNA. This Streptomyces avermitilis (strain ATCC 31267 / DSM 46492 / JCM 5070 / NBRC 14893 / NCIMB 12804 / NRRL 8165 / MA-4680) protein is Small ribosomal subunit protein bS20.